Reading from the N-terminus, the 393-residue chain is tRNA (guanine-N(7)-)-methyltransferase (393 aa).

The S-adenosyl-L-methionine site is built by Glu124, Glu149, and Asp176. Asp232 contributes to the substrate binding site.

This sequence belongs to the class I-like SAM-binding methyltransferase superfamily. TrmB family.

It carries out the reaction guanosine(46) in tRNA + S-adenosyl-L-methionine = N(7)-methylguanosine(46) in tRNA + S-adenosyl-L-homocysteine. It functions in the pathway tRNA modification; N(7)-methylguanine-tRNA biosynthesis. Catalyzes the formation of N(7)-methylguanine at position 46 (m7G46) in tRNA. The polypeptide is tRNA (guanine-N(7)-)-methyltransferase (Helicobacter pylori (strain ATCC 700392 / 26695) (Campylobacter pylori)).